The sequence spans 194 residues: Fibroblast growth factor 7 (194 aa).

An N-terminal signal peptide occupies residues 1 to 31 (MHKWILTWILPTLLYRSCFHIICLVGTISLA). N-linked (GlcNAc...) asparagine glycosylation is present at asparagine 45.

Belongs to the heparin-binding growth factors family. As to quaternary structure, interacts with FGFBP1. Interacts with FGFR2. Affinity between fibroblast growth factors (FGFs) and their receptors is increased by heparan sulfate glycosaminoglycans that function as coreceptors. As to expression, epithelial cell.

Its subcellular location is the secreted. In terms of biological role, plays an important role in the regulation of embryonic development, cell proliferation and cell differentiation. Required for normal branching morphogenesis. Growth factor active on keratinocytes. Possible major paracrine effector of normal epithelial cell proliferation. The protein is Fibroblast growth factor 7 (FGF7) of Homo sapiens (Human).